We begin with the raw amino-acid sequence, 366 residues long: E3 ubiquitin-protein ligase SINA-like 1 (366 aa).

The disordered stretch occupies residues 1 to 37; that stretch reads MVKGTNAEQALAREEASSSRPKRQRVPSIVEEEGENG. Residues 56–92 form an RING-type; degenerate zinc finger; that stretch reads CPICCNALTIPIFQCDKGHIACSSCCTNVSNKCPYCS. An SBD region spans residues 106-354; that stretch reads VVEAFIVRCP…KGTYICIRSL (249 aa). The SIAH-type; degenerate zinc-finger motif lies at 109–232; that stretch reads AFIVRCPIVA…LYSHYAANHK (124 aa). Zn(2+) is bound by residues Cys-114, Cys-186, His-198, Cys-202, Cys-209, Cys-214, His-226, and His-231.

This sequence belongs to the SINA (Seven in absentia) family.

It catalyses the reaction S-ubiquitinyl-[E2 ubiquitin-conjugating enzyme]-L-cysteine + [acceptor protein]-L-lysine = [E2 ubiquitin-conjugating enzyme]-L-cysteine + N(6)-ubiquitinyl-[acceptor protein]-L-lysine.. Its pathway is protein modification; protein ubiquitination. In terms of biological role, E3 ubiquitin-protein ligase that mediates ubiquitination and subsequent proteasomal degradation of target proteins. E3 ubiquitin ligases accept ubiquitin from an E2 ubiquitin-conjugating enzyme in the form of a thioester and then directly transfers the ubiquitin to targeted substrates. It probably triggers the ubiquitin-mediated degradation of different substrates. In Arabidopsis thaliana (Mouse-ear cress), this protein is E3 ubiquitin-protein ligase SINA-like 1.